We begin with the raw amino-acid sequence, 387 residues long: Protein kinase ORF16 (387 aa).

One can recognise a Protein kinase domain in the interval 82-381 (KKILSRVGPE…VTLMTELSLL (300 aa)). Residue K122 participates in ATP binding. D226 (proton acceptor) is an active-site residue.

This sequence belongs to the protein kinase superfamily. Ser/Thr protein kinase family.

The enzyme catalyses L-seryl-[protein] + ATP = O-phospho-L-seryl-[protein] + ADP + H(+). The catalysed reaction is L-threonyl-[protein] + ATP = O-phospho-L-threonyl-[protein] + ADP + H(+). This chain is Protein kinase ORF16 (ORF16), found in Ictalurid herpesvirus 1 (strain Auburn) (IcHV-1).